The sequence spans 430 residues: Adenylosuccinate synthetase (430 aa).

GTP is bound by residues 12–18 (GDEGKGK) and 40–42 (GHT). D13 serves as the catalytic Proton acceptor. The Mg(2+) site is built by D13 and G40. IMP is bound by residues 13 to 16 (DEGK), 38 to 41 (NAGH), T128, R142, Q223, T238, and R302. The active-site Proton donor is H41. Position 298 to 304 (298 to 304 (TTTGRPR)) interacts with substrate. Residues R304, 330 to 332 (SID), and 412 to 414 (SVG) contribute to the GTP site.

It belongs to the adenylosuccinate synthetase family. Homodimer. Mg(2+) is required as a cofactor.

It localises to the cytoplasm. It carries out the reaction IMP + L-aspartate + GTP = N(6)-(1,2-dicarboxyethyl)-AMP + GDP + phosphate + 2 H(+). It participates in purine metabolism; AMP biosynthesis via de novo pathway; AMP from IMP: step 1/2. Plays an important role in the de novo pathway of purine nucleotide biosynthesis. Catalyzes the first committed step in the biosynthesis of AMP from IMP. In Streptococcus pyogenes serotype M49 (strain NZ131), this protein is Adenylosuccinate synthetase.